The primary structure comprises 421 residues: Tyrosine--tRNA ligase (421 aa).

Tyr38 contacts L-tyrosine. Residues 43–52 (PTGDSLHIGH) carry the 'HIGH' region motif. 2 residues coordinate L-tyrosine: Tyr169 and Gln173. A 'KMSKS' region motif is present at residues 231–235 (KFGKS). Lys234 contacts ATP. In terms of domain architecture, S4 RNA-binding spans 353–419 (KNLVDFLVDT…GKKKYTLVHI (67 aa)).

This sequence belongs to the class-I aminoacyl-tRNA synthetase family. TyrS type 1 subfamily. Homodimer.

The protein resides in the cytoplasm. It carries out the reaction tRNA(Tyr) + L-tyrosine + ATP = L-tyrosyl-tRNA(Tyr) + AMP + diphosphate + H(+). Catalyzes the attachment of tyrosine to tRNA(Tyr) in a two-step reaction: tyrosine is first activated by ATP to form Tyr-AMP and then transferred to the acceptor end of tRNA(Tyr). This chain is Tyrosine--tRNA ligase, found in Lactobacillus delbrueckii subsp. bulgaricus (strain ATCC 11842 / DSM 20081 / BCRC 10696 / JCM 1002 / NBRC 13953 / NCIMB 11778 / NCTC 12712 / WDCM 00102 / Lb 14).